Consider the following 1390-residue polypeptide: DNA-directed RNA polymerase III subunit RPC1 (1390 aa).

Residues cysteine 69, cysteine 72, cysteine 79, histidine 82, cysteine 109, and cysteine 112 each contribute to the Zn(2+) site. Lysine 144 provides a ligand contact to DNA. Zn(2+) is bound by residues cysteine 156 and cysteine 159. DNA is bound by residues lysine 167, serine 326, lysine 348, arginine 353, arginine 360, and arginine 366. Lysine 445 bears the N6-acetyllysine mark. An RNA-binding site is contributed by arginine 464. Mg(2+) is bound by residues aspartate 499, aspartate 501, and aspartate 503. Residue aspartate 503 coordinates RNA. The interval 843 to 884 is bridging helix; that stretch reads TPTEFFFHTMAGREGLVDTAVKTAETGYMQRRLVKSLEDLCS. The tract at residues 1029–1070 is trigger loop; sequence PGSAVGALCAQSIGEPGTQMTLKTFHFAGVASMNITLGVPRI. DNA is bound by residues arginine 1159, arginine 1305, and lysine 1323.

It belongs to the RNA polymerase beta' chain family. In terms of assembly, component of the RNA polymerase III (Pol III) (Pol III) complex consisting of 17 subunits: a ten-subunit catalytic core composed of POLR3A/RPC1, POLR3B/RPC2, POLR1C/RPAC1, POLR1D/RPAC2, POLR3K/RPC10, POLR2E/RPABC1, POLR2F/RPABC2, POLR2H/RPABC3, POLR2K/RPABC4 and POLR2L/RPABC5; a mobile stalk composed of two subunits POLR3H/RPC8 and CRCP/RPC9, protruding from the core and functioning primarily in transcription initiation; and additional subunits homologous to general transcription factors of the RNA polymerase II machinery, POLR3C/RPC3-POLR3F/RPC6-POLR3G/RPC7 heterotrimer required for transcription initiation and POLR3D/RPC4-POLR3E/RPC5 heterodimer involved in both transcription initiation and termination. Pol III exists as two alternative complexes defined by the mutually exclusive incorporation of subunit POLR3G/RPC7alpha or POLR3GL/RPC7beta. The presence of POLR3G/RPC7alpha or POLR3GL/RPC7beta differentially modulates the transcription potential of Pol III, with POLR3G/RPC7alpha specifically associated with transcription of snaR-A non-coding RNAs. As part of the RNA polymerase III complex, interacts with PKP2. It depends on Mg(2+) as a cofactor. In terms of tissue distribution, expressed in the brain, in the cortex and the white matter (at protein level).

The protein localises to the nucleus. It is found in the cytoplasm. It localises to the cytosol. It catalyses the reaction RNA(n) + a ribonucleoside 5'-triphosphate = RNA(n+1) + diphosphate. In terms of biological role, catalytic core component of RNA polymerase III (Pol III), a DNA-dependent RNA polymerase which synthesizes small non-coding RNAs using the four ribonucleoside triphosphates as substrates. Synthesizes 5S rRNA, snRNAs, tRNAs and miRNAs from at least 500 distinct genomic loci. Pol III-mediated transcription cycle proceeds through transcription initiation, transcription elongation and transcription termination stages. During transcription initiation, Pol III is recruited to DNA promoters type I, II or III with the help of general transcription factors and other specific initiation factors. Once the polymerase has escaped from the promoter it enters the elongation phase during which RNA is actively polymerized, based on complementarity with the template DNA strand. Transcription termination involves the release of the RNA transcript and polymerase from the DNA. Forms Pol III active center together with the second largest subunit POLR3B/RPC2. Appends one nucleotide at a time to the 3' end of the nascent RNA, with POLR3A/RPC1 contributing a Mg(2+)-coordinating DxDGD motif, and POLR3B/RPC2 participating in the coordination of a second Mg(2+) ion and providing lysine residues believed to facilitate Watson-Crick base pairing between the incoming nucleotide and template base. Typically, Mg(2+) ions direct a 5' nucleoside triphosphate to form a phosphodiester bond with the 3' hydroxyl of the preceding nucleotide of the nascent RNA, with the elimination of pyrophosphate. Pol III plays a key role in sensing and limiting infection by intracellular bacteria and DNA viruses. Acts as a nuclear and cytosolic DNA sensor involved in innate immune response. Can sense non-self dsDNA that serves as template for transcription into dsRNA. The non-self RNA polymerase III transcripts, such as Epstein-Barr virus-encoded RNAs (EBERs) induce type I interferon and NF-kappa-B through the RIG-I pathway. The chain is DNA-directed RNA polymerase III subunit RPC1 from Homo sapiens (Human).